Reading from the N-terminus, the 461-residue chain is Photosystem II CP43 reaction center protein (461 aa).

Positions 1 to 2 (ME) are excised as a propeptide. Residue threonine 3 is modified to N-acetylthreonine. Phosphothreonine is present on threonine 3. The next 5 helical transmembrane spans lie at 57 to 81 (LFEV…PHIA), 122 to 143 (LIGP…KDKN), 166 to 188 (KAMY…RVIT), 243 to 263 (TPWP…LSYS), and 279 to 300 (WFNN…ASQS). Glutamate 355 serves as a coordination point for [CaMn4O5] cluster. Residues 435-459 (RARAAAAGFEKGIDRFDEPVLSMRP) traverse the membrane as a helical segment.

It belongs to the PsbB/PsbC family. PsbC subfamily. PSII is composed of 1 copy each of membrane proteins PsbA, PsbB, PsbC, PsbD, PsbE, PsbF, PsbH, PsbI, PsbJ, PsbK, PsbL, PsbM, PsbT, PsbX, PsbY, PsbZ, Psb30/Ycf12, at least 3 peripheral proteins of the oxygen-evolving complex and a large number of cofactors. It forms dimeric complexes. Binds multiple chlorophylls and provides some of the ligands for the Ca-4Mn-5O cluster of the oxygen-evolving complex. It may also provide a ligand for a Cl- that is required for oxygen evolution. PSII binds additional chlorophylls, carotenoids and specific lipids. is required as a cofactor. Phosphorylated in vitro.

Its subcellular location is the plastid. It localises to the chloroplast thylakoid membrane. One of the components of the core complex of photosystem II (PSII). It binds chlorophyll and helps catalyze the primary light-induced photochemical processes of PSII. PSII is a light-driven water:plastoquinone oxidoreductase, using light energy to abstract electrons from H(2)O, generating O(2) and a proton gradient subsequently used for ATP formation. The chain is Photosystem II CP43 reaction center protein from Chlamydomonas reinhardtii (Chlamydomonas smithii).